Reading from the N-terminus, the 321-residue chain is Acetyl-coenzyme A carboxylase carboxyl transferase subunit alpha (321 aa).

One can recognise a CoA carboxyltransferase C-terminal domain in the interval 32–293 (DISEEIARLQ…KRVLQDQLKE (262 aa)).

This sequence belongs to the AccA family. In terms of assembly, acetyl-CoA carboxylase is a heterohexamer composed of biotin carboxyl carrier protein (AccB), biotin carboxylase (AccC) and two subunits each of ACCase subunit alpha (AccA) and ACCase subunit beta (AccD).

The protein localises to the cytoplasm. It catalyses the reaction N(6)-carboxybiotinyl-L-lysyl-[protein] + acetyl-CoA = N(6)-biotinyl-L-lysyl-[protein] + malonyl-CoA. It functions in the pathway lipid metabolism; malonyl-CoA biosynthesis; malonyl-CoA from acetyl-CoA: step 1/1. In terms of biological role, component of the acetyl coenzyme A carboxylase (ACC) complex. First, biotin carboxylase catalyzes the carboxylation of biotin on its carrier protein (BCCP) and then the CO(2) group is transferred by the carboxyltransferase to acetyl-CoA to form malonyl-CoA. The sequence is that of Acetyl-coenzyme A carboxylase carboxyl transferase subunit alpha from Chromobacterium violaceum (strain ATCC 12472 / DSM 30191 / JCM 1249 / CCUG 213 / NBRC 12614 / NCIMB 9131 / NCTC 9757 / MK).